A 288-amino-acid chain; its full sequence is MNDLISAAYSERLRRVCDHIERHLDEPLSIEALSRMAHSSPFHFHRQFTTWSGLPLYRYIQWLRLRRASWRLAFNPQDKVIDIALDAGFQNPESFTRAFKTAFGQSPRRFRQSPDWLAWHQRVPKLALQEQHVMDVKIVEFPPTRVAMLTHLGHPDKVNASAAKFIAWRRETGQSPIASSQTFGIAWHDPQTTPPAQFRFDICGSVRQPIAENDVGVVNSEIPGGRCAVVRHQGSLDSLPESVWYLFREWLPASGETPRDFPVFFQYLNFVHEVAEHELLTDIYLPLR.

The 100-residue stretch at 14–113 (RRVCDHIERH…GQSPRRFRQS (100 aa)) folds into the HTH araC/xylS-type domain. DNA-binding regions (H-T-H motif) lie at residues 31 to 52 (EALS…TTWS) and 80 to 103 (VIDI…KTAF). The putative effector binding domain; binds the peptide antibiotic albicidin stretch occupies residues 111 to 288 (RQSPDWLAWH…LLTDIYLPLR (178 aa)).

As to quaternary structure, homodimer.

Functionally, probable transcription factor. In Salmonella typhimurium (strain LT2 / SGSC1412 / ATCC 700720), this protein is Probable HTH-type transcriptional regulator STM3175.